The following is a 461-amino-acid chain: Alpha-L-fucosidase (461 aa).

An N-terminal signal peptide occupies residues 1–18 (MKMIIIFFILLILNLIKS).

This sequence belongs to the glycosyl hydrolase 29 family.

The catalysed reaction is an alpha-L-fucoside + H2O = L-fucose + an alcohol. In terms of biological role, alpha-L-fucosidase is responsible for hydrolyzing the alpha-1,6-linked fucose joined to the reducing-end N-acetylglucosamine of the carbohydrate moieties of glycoproteins. The polypeptide is Alpha-L-fucosidase (alfA) (Dictyostelium discoideum (Social amoeba)).